The following is a 174-amino-acid chain: 3-hydroxydecanoyl-[acyl-carrier-protein] dehydratase (174 aa).

His73 is an active-site residue.

Belongs to the thioester dehydratase family. FabA subfamily. In terms of assembly, homodimer.

The protein resides in the cytoplasm. The enzyme catalyses a (3R)-hydroxyacyl-[ACP] = a (2E)-enoyl-[ACP] + H2O. The catalysed reaction is (3R)-hydroxydecanoyl-[ACP] = (2E)-decenoyl-[ACP] + H2O. It catalyses the reaction (2E)-decenoyl-[ACP] = (3Z)-decenoyl-[ACP]. Its pathway is lipid metabolism; fatty acid biosynthesis. In terms of biological role, necessary for the introduction of cis unsaturation into fatty acids. Catalyzes the dehydration of (3R)-3-hydroxydecanoyl-ACP to E-(2)-decenoyl-ACP and then its isomerization to Z-(3)-decenoyl-ACP. Can catalyze the dehydratase reaction for beta-hydroxyacyl-ACPs with saturated chain lengths up to 16:0, being most active on intermediate chain length. The protein is 3-hydroxydecanoyl-[acyl-carrier-protein] dehydratase of Cellvibrio japonicus (strain Ueda107) (Pseudomonas fluorescens subsp. cellulosa).